We begin with the raw amino-acid sequence, 328 residues long: MNDNAFTFQTLHPETIMDALFEQGIRVDSGLTPLNSYENRVYQFQDEDRRRFVVKFYRPERWSVDQIREEHQFALELVKDEVPVAAPLAFNGQTLLAHQGYHYAIFPSVGGRQFEADNIDQMEAVGRYLGRLHQTGRKRPFTFRPDIGLAEYLFEPRQVFEDAALIPSGQKAAFLKATDTLLSAVTECWRTDFATLRLHGDCHAGNILWRDGPLFVDLDDARNGPAIQDLWMLLNGNKAEQRMQLETIIEAYEEVSEFDTAEIGLIEPLRAMRLVYYLAWLIRRWGDPAFPKNFPWLTGEDYWQRQTTTFIEQTKILHEPPLQLTPMY.

Asp201 (proton acceptor) is an active-site residue. Residues Asn206 and Asp217 each contribute to the Mg(2+) site. Asp217 is a catalytic residue.

Belongs to the SrkA/RdoA protein kinase family. Monomer. Requires Mg(2+) as cofactor.

The protein localises to the cytoplasm. It carries out the reaction L-seryl-[protein] + ATP = O-phospho-L-seryl-[protein] + ADP + H(+). It catalyses the reaction L-threonyl-[protein] + ATP = O-phospho-L-threonyl-[protein] + ADP + H(+). A protein kinase that phosphorylates Ser and Thr residues. Probably acts to suppress the effects of stress linked to accumulation of reactive oxygen species. Probably involved in the extracytoplasmic stress response. This Salmonella paratyphi A (strain ATCC 9150 / SARB42) protein is Stress response kinase A.